The following is a 487-amino-acid chain: Vacuolar protein sorting-associated protein 30 (487 aa).

Positions 33–129 (PQTLKKSSVP…DNPDAPMGSE (97 aa)) are disordered. The segment covering 52–62 (QSRKSIYDRVS) has biased composition (basic and acidic residues). Over residues 81–94 (SSMSFVLLSESQMA) the composition is skewed to polar residues. Residues 152 to 282 (VECTEMLVEG…DSQLLEKLQR (131 aa)) adopt a coiled-coil conformation. A BARA region spans residues 283 to 480 (SNVYNDTFCI…LAHASNVTSN (198 aa)). The segment at 456-481 (WTKACKLTLTCCKFLLAHASNVTSNA) is required for membrane-association, autophagic function during starvation and normal autophagosome morphology.

This sequence belongs to the beclin family. Component of the autophagy-specific VPS34 PI3-kinase complex I; and of the VPS34 PI3-kinase complex II.

It is found in the endosome membrane. The protein localises to the vacuole membrane. The protein resides in the preautophagosomal structure membrane. Required for cytoplasm to vacuole transport (Cvt), autophagy, nucleophagy, and mitophagy, as a part of the autophagy-specific VPS34 PI3-kinase complex I. This complex is essential to recruit the ATG8-phosphatidylinositol conjugate and the ATG12-ATG5 conjugate to the pre-autophagosomal structure. Also involved in endosome-to-Golgi retrograde transport as part of the VPS34 PI3-kinase complex II. Autophagy is required for proper vegetative growth, asexual/sexual reproduction, and full virulence. Autophagy is particularly involved in the biosynthesis of deoxynivalenol (DON), an important virulence determinant. This Gibberella zeae (strain ATCC MYA-4620 / CBS 123657 / FGSC 9075 / NRRL 31084 / PH-1) (Wheat head blight fungus) protein is Vacuolar protein sorting-associated protein 30.